The sequence spans 81 residues: Conotoxin Lt6.4 (81 aa).

Positions 1-19 (MKLVLAIVLILMFLSLSAG) are cleaved as a signal peptide. Residues 20–42 (AETSDNGVSRGGHRPQYWPVTPP) constitute a propeptide that is removed on maturation. 3 disulfide bridges follow: Cys46–Cys60, Cys53–Cys65, and Cys59–Cys80.

This sequence belongs to the conotoxin I3 superfamily. Expressed by the venom duct.

It localises to the secreted. This chain is Conotoxin Lt6.4, found in Conus litteratus (Lettered cone).